The primary structure comprises 290 residues: DegV domain-containing protein MG450 (290 aa).

Positions 3-289 (IAFLVDSVSN…INSYAFLIQT (287 aa)) constitute a DegV domain. T65 and S97 together coordinate hexadecanoate.

May bind long-chain fatty acids, such as palmitate, and may play a role in lipid transport or fatty acid metabolism. The protein is DegV domain-containing protein MG450 of Mycoplasma genitalium (strain ATCC 33530 / DSM 19775 / NCTC 10195 / G37) (Mycoplasmoides genitalium).